Consider the following 170-residue polypeptide: MSIEVVNESGIDVAEGELVSVARFAIAAMDVHPAAELSMMLVDLAAMADLHMRWMDLPGPTDVMSFPMDELEPGGRPDAPEPGPSMLGDIVLCPQFAAEQAEAAGHSLAHELALLTVHGVLHLLGYDHAEPEEEREMFALQNQLLQDWYEQQAQLYRDSRLLDKSRNFDE.

3 residues coordinate Zn(2+): His-118, His-122, and His-128.

Belongs to the endoribonuclease YbeY family. The cofactor is Zn(2+).

The protein resides in the cytoplasm. Functionally, single strand-specific metallo-endoribonuclease involved in late-stage 70S ribosome quality control and in maturation of the 3' terminus of the 16S rRNA. In Mycobacteroides abscessus (strain ATCC 19977 / DSM 44196 / CCUG 20993 / CIP 104536 / JCM 13569 / NCTC 13031 / TMC 1543 / L948) (Mycobacterium abscessus), this protein is Endoribonuclease YbeY.